The primary structure comprises 62 residues: Potassium channel toxin gamma-KTx 1.1 (62 aa).

An N-terminal signal peptide occupies residues 1–20 (MKVLILIMIIASLMIMGVEM). Disulfide bonds link cysteine 25–cysteine 43, cysteine 31–cysteine 54, cysteine 40–cysteine 59, and cysteine 44–cysteine 61.

This sequence belongs to the ergtoxin family. Gamma-KTx 1 subfamily. In terms of processing, after protein storage at -20 Celsius degrees during a couple of months, the Met-55 of a small number of toxins is naturally oxidized. This oxidized form is about three orders of magnitude less efficient (IC(50)=15 uM) than non-oxidized form. Expressed by the venom gland.

It localises to the secreted. Its function is as follows. Blocks human and rat Kv11.1/KCNH2/ERG1 and Kv11.3/KCNH7/ERG3, as well as rat (but not human) Kv11.2/KCNH6/ERG2 by binding to channel outer vestibule (S5P domain) with a 1:1 stoichiometry. Inhibition data are the following: hERG1 (reversible, IC(50)~7 nM), rERG1 (reversible, Kd=6.8 nM), rERG2 (irreversible, Kd=2.8 nM), hERG3 (irreversible, Kd=4.05 nM) and rERG3 (reversible, Kd=38.1 nM) potassium channels. The toxin potency is not affected by elevating potassium ion concentration from 2 to 98 mM. This toxin only blocks channels in a closed state. At high toxin concentrations, block of Kv11.1/KCNH2/ERG1 macroscopic current is incomplete (93.5%). This suggests a kinetic mechanism model with two different states of toxin-channel binding (T+C=TC*=TC; in the TC* state, the toxin binds the channel but does not occlude the pore, whereas in the TC state the toxin binds and occludes the pore). In this model, incomplete block is explained by the relatively fast dissociation rate from the blocked channel conformation (TC) relative to the rate of conversion of the toxin-channel encounter complex (TC*) to the blocked channel conformation (TC). The sequence is that of Potassium channel toxin gamma-KTx 1.1 from Centruroides noxius (Mexican scorpion).